We begin with the raw amino-acid sequence, 647 residues long: Knirps-related protein (647 aa).

The nuclear receptor DNA-binding region spans 11–87; sequence NQTCKVCGEP…VGMSKSGSRY (77 aa). NR C4-type zinc fingers lie at residues 14 to 34 and 51 to 75; these read CKVC…CEGC and CKNN…LKKC. Disordered regions lie at residues 111-142, 196-274, 340-383, and 402-600; these read MAAH…KGMS, HKHP…LSPF, GAGQ…LLTN, and SQQQ…NSIL. Positions 120-134 are enriched in gly residues; it reads AGGGSSGGSGGGQGM. 2 stretches are compositionally biased toward low complexity: residues 200 to 223 and 232 to 247; these read VVAS…VSSV and GGKS…ADGS. Residues 248-260 are compositionally biased toward gly residues; the sequence is HSGGGGGGGGGVT. Polar residues-rich tracts occupy residues 370–381 and 420–432; these read SPSTHANNNHLL and DYSI…PNSE. Composition is skewed to basic and acidic residues over residues 433 to 443 and 480 to 491; these read SGRERVKSRQN and QEERTPAGEDPR. Residues 502–519 are compositionally biased toward low complexity; the sequence is LSMKTTGSSLSSKSSSPE. The span at 520–541 shows a compositional bias: acidic residues; that stretch reads IEPETEISSDVEKNDTDDDDED. Over residues 542-556 the composition is skewed to basic and acidic residues; that stretch reads LKVTPEEEISVRETA. Residues 567–579 show a composition bias toward polar residues; the sequence is TTETAKTSIENTH. Residues 580–599 are compositionally biased toward low complexity; sequence NNNNSISNNNNNNNNNNNSI.

Belongs to the nuclear hormone receptor family. NR0 subfamily.

It is found in the nucleus. The protein is Knirps-related protein (knrl) of Drosophila melanogaster (Fruit fly).